A 374-amino-acid polypeptide reads, in one-letter code: Probable tuliposide A-converting enzyme b6, amyloplastic (374 aa).

An amyloplast-targeting transit peptide spans 1 to 68; it reads MSVALFCGPP…TNSSLSPSPT (68 aa). Ser226 functions as the Acyl-ester intermediate in the catalytic mechanism. Active-site charge relay system residues include Asp316 and His348.

It belongs to the AB hydrolase superfamily. In terms of assembly, homodimer.

It localises to the plastid. The protein localises to the amyloplast. The enzyme catalyses 6-tuliposide A = tulipalin A + D-glucose. In terms of biological role, lactone-forming carboxylesterases, specifically catalyzing intramolecular transesterification, but not hydrolysis. Involved in the biosynthesis of tulipalins, defensive chemicals that show antimicrobial activities against a broad range of strains of bacteria and fungi. Substrates are 6-tuliposide A &gt; 6-tuliposide B. This chain is Probable tuliposide A-converting enzyme b6, amyloplastic (TCEA-B6), found in Tulipa gesneriana (Garden tulip).